The chain runs to 95 residues: Co-chaperonin GroES (95 aa).

Belongs to the GroES chaperonin family. Heptamer of 7 subunits arranged in a ring. Interacts with the chaperonin GroEL.

It localises to the cytoplasm. Together with the chaperonin GroEL, plays an essential role in assisting protein folding. The GroEL-GroES system forms a nano-cage that allows encapsulation of the non-native substrate proteins and provides a physical environment optimized to promote and accelerate protein folding. GroES binds to the apical surface of the GroEL ring, thereby capping the opening of the GroEL channel. This Maricaulis maris (strain MCS10) (Caulobacter maris) protein is Co-chaperonin GroES.